Here is a 124-residue protein sequence, read N- to C-terminus: Small ribosomal subunit protein eS25 (124 aa).

A compositionally biased stretch (basic and acidic residues) spans 1-22 (PPKDDKKKKDAGKSAKKDKDPV). The tract at residues 1 to 37 (PPKDDKKKKDAGKSAKKDKDPVNKSGGKAKKKKWSKG) is disordered. The segment covering 27–37 (GKAKKKKWSKG) has biased composition (basic residues). Lys42 bears the N6-acetyllysine mark. An N6-acetyllysine; alternate modification is found at Lys51. At Lys51 the chain carries N6-succinyllysine; alternate. 2 positions are modified to N6-acetyllysine: Lys59 and Lys65. The residue at position 93 (Lys93) is an N6-acetyllysine; alternate. The residue at position 93 (Lys93) is an N6-succinyllysine; alternate.

Belongs to the eukaryotic ribosomal protein eS25 family. Component of the small ribosomal subunit.

It is found in the cytoplasm. In terms of biological role, component of the small ribosomal subunit. The ribosome is a large ribonucleoprotein complex responsible for the synthesis of proteins in the cell. This Oryctolagus cuniculus (Rabbit) protein is Small ribosomal subunit protein eS25 (RPS25).